The primary structure comprises 763 residues: Translation initiation factor IF-2 (763 aa).

The tract at residues 52 to 178 is disordered; the sequence is KQKKVQTSQN…KDEAIKHETK (127 aa). Over residues 65–82 the composition is skewed to basic and acidic residues; that stretch reads SNDENKKITNKNTEKTTE. Residues 86–96 show a composition bias toward polar residues; sequence TVDSNKQNNSN. Composition is skewed to basic and acidic residues over residues 105–116 and 123–135; these read RNNDEESVSHFD and KSEM…LNDK. The segment covering 136 to 145 has biased composition (basic residues); that stretch reads KKNKNFKNTK. Residues 146–161 show a composition bias toward low complexity; it reads NKNSNNNKNSKNNKNN. Residues 162–178 show a composition bias toward basic and acidic residues; the sequence is KNNDHNRKDEAIKHETK. One can recognise a tr-type G domain in the interval 265–434; the sequence is ERPPVITVMG…LMVAEMEELK (170 aa). The G1 stretch occupies residues 274–281; the sequence is GHVDHGKT. Position 274–281 (274–281) interacts with GTP; it reads GHVDHGKT. Residues 299–303 are G2; that stretch reads GITQH. A G3 region spans residues 320 to 323; sequence DTPG. GTP is bound by residues 320–324 and 374–377; these read DTPGH and NKID. Positions 374–377 are G4; that stretch reads NKID. The segment at 410–412 is G5; sequence SAR.

It belongs to the TRAFAC class translation factor GTPase superfamily. Classic translation factor GTPase family. IF-2 subfamily.

Its subcellular location is the cytoplasm. One of the essential components for the initiation of protein synthesis. Protects formylmethionyl-tRNA from spontaneous hydrolysis and promotes its binding to the 30S ribosomal subunits. Also involved in the hydrolysis of GTP during the formation of the 70S ribosomal complex. This Finegoldia magna (strain ATCC 29328 / DSM 20472 / WAL 2508) (Peptostreptococcus magnus) protein is Translation initiation factor IF-2.